We begin with the raw amino-acid sequence, 587 residues long: Aspartate--tRNA ligase (587 aa).

Glutamate 175 contributes to the L-aspartate binding site. Positions 199-202 (QQFK) are aspartate. Positions 221 and 446 each coordinate L-aspartate. An ATP-binding site is contributed by 221–223 (RDE). An ATP-binding site is contributed by glutamate 480. Arginine 487 serves as a coordination point for L-aspartate. ATP is bound at residue 532 to 535 (GVDR).

Belongs to the class-II aminoacyl-tRNA synthetase family. Type 1 subfamily. In terms of assembly, homodimer.

The protein localises to the cytoplasm. The enzyme catalyses tRNA(Asp) + L-aspartate + ATP = L-aspartyl-tRNA(Asp) + AMP + diphosphate. Functionally, catalyzes the attachment of L-aspartate to tRNA(Asp) in a two-step reaction: L-aspartate is first activated by ATP to form Asp-AMP and then transferred to the acceptor end of tRNA(Asp). This is Aspartate--tRNA ligase from Streptomyces coelicolor (strain ATCC BAA-471 / A3(2) / M145).